A 335-amino-acid polypeptide reads, in one-letter code: Homeobox protein Hox-A1 (335 aa).

A disordered region spans residues 61-80; the sequence is IGSPHHHHHHHHRHPQPATY. Basic residues predominate over residues 64 to 75; the sequence is PHHHHHHHHRHP. The interaction with OGT stretch occupies residues 75-203; that stretch reads PQPATYQTSG…PASETSSPAQ (129 aa). An Antp-type hexapeptide motif is present at residues 204-209; it reads TFDWMK. Residues 229–288 constitute a DNA-binding region (homeobox); it reads PNAVRTNFTTKQLTELEKEFHFNKYLTRARRVEIAASLQLNETQVKIWFQNRRMKQKKRE. Positions 281–335 are disordered; it reads RMKQKKREKEGLLPISPATPPGNDEKAEESSEKSSSSPCVPSPGSSTSDTLTTSH. Residues 303–312 are compositionally biased toward basic and acidic residues; sequence NDEKAEESSE. Residues 313–328 show a composition bias toward low complexity; that stretch reads KSSSSPCVPSPGSSTS.

It belongs to the Antp homeobox family. Labial subfamily. Interacts with OGT (via TPR repeats domain); the interaction takes place mainly in the nucleus. Forms a DNA-binding heterodimer with transcription factor PBX1.

Its subcellular location is the nucleus. Functionally, sequence-specific transcription factor. Regulates multiple developmental processes including brainstem, inner and outer ear, abducens nerve and cardiovascular development and morphogenesis as well as cognition and behavior. Also part of a developmental regulatory system that provides cells with specific positional identities on the anterior-posterior axis. Acts on the anterior body structures. Seems to act in the maintenance and/or generation of hindbrain segments. Activates transcription in the presence of PBX1A and PKNOX1. The protein is Homeobox protein Hox-A1 (HOXA1) of Homo sapiens (Human).